Here is a 159-residue protein sequence, read N- to C-terminus: Large ribosomal subunit protein uL15 (159 aa).

Over residues 21-34 (LRPAPGAHKSKIRV) the composition is skewed to basic residues. The disordered stretch occupies residues 21 to 55 (LRPAPGAHKSKIRVGRGEGSKGKTAGRGTKGSKAR).

It belongs to the universal ribosomal protein uL15 family. As to quaternary structure, part of the 50S ribosomal subunit.

Functionally, binds to the 23S rRNA. This chain is Large ribosomal subunit protein uL15, found in Frankia casuarinae (strain DSM 45818 / CECT 9043 / HFP020203 / CcI3).